The following is a 509-amino-acid chain: MKRALISVSDKNGIVPFAEKLVELGVEIISTGGTKAAFEQAGVPVTGIEEVTEFPEMLDGRVKTLHPAIHGGLLARRDTAEHMEAIAAHNIKPIDLVIVNLYPFQETIQKPGVTLEEAIENIDIGGPSMLRSAAKNYAAVTVVVDTADYDAVLTELQEHGATTFETRQRLAAKVFRHTAAYDALIAEYLTNITGETFPEKVTFTYNRKQVLRYGENPHQDAAFYTEPGTIENSISAAKQLHGKELSYNNIRDADAALKIASEFTEPVAVAVKHMNPCGVGVGENIEEAYLKAYEADETSIFGGIVALNKEVDAKTAEHMSKIFLEIVIAPSFSEEAFAILAKKKNIRLLTVPFAGNMEGFEKTSVNGGLLIQANDSLVEDTTSYEVVTEKQPTDSEMKALLAQWKIVKHVKSNAIVVGSDKQTLGIGAGQMNRIGSALIALEQAGEKAKGAVLASDAFFPMDDTVEAAAKSGITAIIQPGGSIKDKESIAMADKYGISMVLTHVRHFKH.

The 144-residue stretch at 1–144 (MKRALISVSD…KNYAAVTVVV (144 aa)) folds into the MGS-like domain.

This sequence belongs to the PurH family.

It catalyses the reaction (6R)-10-formyltetrahydrofolate + 5-amino-1-(5-phospho-beta-D-ribosyl)imidazole-4-carboxamide = 5-formamido-1-(5-phospho-D-ribosyl)imidazole-4-carboxamide + (6S)-5,6,7,8-tetrahydrofolate. The enzyme catalyses IMP + H2O = 5-formamido-1-(5-phospho-D-ribosyl)imidazole-4-carboxamide. Its pathway is purine metabolism; IMP biosynthesis via de novo pathway; 5-formamido-1-(5-phospho-D-ribosyl)imidazole-4-carboxamide from 5-amino-1-(5-phospho-D-ribosyl)imidazole-4-carboxamide (10-formyl THF route): step 1/1. It functions in the pathway purine metabolism; IMP biosynthesis via de novo pathway; IMP from 5-formamido-1-(5-phospho-D-ribosyl)imidazole-4-carboxamide: step 1/1. The protein is Bifunctional purine biosynthesis protein PurH of Listeria monocytogenes serovar 1/2a (strain ATCC BAA-679 / EGD-e).